The chain runs to 521 residues: Circadian clock oscillator protein KaiC (521 aa).

2 KaiC domains span residues 1-248 (MNEP…INIF) and 262-521 (ARIS…LDEE). Positions 50, 51, 52, 53, 54, 55, 90, 225, 226, 227, 229, 231, 241, 291, 292, 293, 294, 295, 296, and 297 each coordinate ATP. Residue Thr54 coordinates Mg(2+). Residue Thr296 coordinates Mg(2+). Glu319 contributes to the Mg(2+) binding site. Trp332 contacts ATP. Ser432 carries the phosphoserine; by autocatalysis modification. Residue Thr433 is modified to Phosphothreonine; by autocatalysis. Residues Arg452, Lys458, Met459, Arg460, Ser462, His464, and Lys466 each coordinate ATP.

The protein belongs to the KaiC family. In terms of assembly, homohexamer; hexamerization is dependent on ATP-binding. The KaiABC complex composition changes during the circadian cycle to control KaiC phosphorylation. Complexes KaiC(6), KaiA(2-4):KaiC(6), KaiB(6):KaiC(6) and KaiC(6):KaiB(6):KaiA(12) are among the most important forms, many form cooperatively. KaiC interacts with SasA, activating its autokinase function and leading to RpaA activation. It depends on Mg(2+) as a cofactor. In terms of processing, phosphorylated on serine and threonine residues by autocatalysis. Has a 4 step phosphorylation cycle; the autokinase acts first on Thr-433, then Ser-432. When Ser-432 is modified KaiC switches to an autophosphatase mode, acting first on phospho-Thr-433 then phospho-Ser-432.

The enzyme catalyses L-seryl-[protein] + ATP = O-phospho-L-seryl-[protein] + ADP + H(+). The catalysed reaction is L-threonyl-[protein] + ATP = O-phospho-L-threonyl-[protein] + ADP + H(+). It carries out the reaction ATP + H2O = ADP + phosphate + H(+). The interaction with KaiA enhances its phosphorylation status, while the interaction with KaiB decreases it. Its function is as follows. Central component of the KaiABC oscillator complex, which constitutes the main circadian regulator in cyanobacteria. Complex composition changes during the circadian cycle to control KaiC phosphorylation. KaiA stimulates KaiC autophosphorylation, while KaiB sequesters KaiA, leading to KaiC autodephosphorylation. Clock output pathways impact the RpaA transcriptional regulator. KaiC enhances the autophosphorylation activity of SasA, which then transfers its phosphate group to RpaA to activate it. KaiB and KaiC together enhance the phospho-RpaA dephosphatase activity of CikA. Functionally, has a weak, temperature-independent ATPase activity; ATPase activity defines the circadian period. The phosphorylation state of KaiC modulates its ATPase activity and effects KaiB binding. This chain is Circadian clock oscillator protein KaiC, found in Rippkaea orientalis (strain PCC 8801 / RF-1) (Cyanothece sp. (strain PCC 8801)).